The chain runs to 269 residues: Phosphate import ATP-binding protein PstB (269 aa).

The ABC transporter domain occupies 22–264 (IKVKNVDFFY…PANKKTEDYI (243 aa)). Position 55-62 (55-62 (GSSGSGKS)) interacts with ATP.

This sequence belongs to the ABC transporter superfamily. Phosphate importer (TC 3.A.1.7) family. As to quaternary structure, the complex is composed of two ATP-binding proteins (PstB), two transmembrane proteins (PstC and PstA) and a solute-binding protein (PstS).

It localises to the cell membrane. The enzyme catalyses phosphate(out) + ATP + H2O = ADP + 2 phosphate(in) + H(+). In terms of biological role, part of the ABC transporter complex PstSACB involved in phosphate import. Responsible for energy coupling to the transport system. The polypeptide is Phosphate import ATP-binding protein PstB (Spiroplasma kunkelii).